The chain runs to 227 residues: MYSAHCMLPELRLYQLISPSLPVGGFTYSQGLEWAIDKGWVTTATELENWLKSQMLESLTCLELPVLVRIQGYLAANDYAQAQAWCNYLAASRETKELRLEEHQRGIAFVRLLPKLGIALTSELTTMVKTSQLAAFALGINQWQIPLDKALGGYLWSWLENAVVVGIKLVPLGQSAGQQLLMSLAENIPAAVEKALLITDQEVGSFTPAQVMASCRHEHQYTRLFRS.

The protein belongs to the UreF family. UreD, UreF and UreG form a complex that acts as a GTP-hydrolysis-dependent molecular chaperone, activating the urease apoprotein by helping to assemble the nickel containing metallocenter of UreC. The UreE protein probably delivers the nickel.

Its subcellular location is the cytoplasm. In terms of biological role, required for maturation of urease via the functional incorporation of the urease nickel metallocenter. In Shewanella halifaxensis (strain HAW-EB4), this protein is Urease accessory protein UreF.